Here is a 286-residue protein sequence, read N- to C-terminus: Putative short-chain type dehydrogenase/reductase Rv0148 (286 aa).

NAD(+) is bound at residue 11–35; that stretch reads VTGAGGGLGREYALTLAGEGASVVV. S151 contributes to the substrate binding site. Residue Y164 is the Proton acceptor of the active site. K280 is covalently cross-linked (Isoglutamyl lysine isopeptide (Lys-Gln) (interchain with Q-Cter in protein Pup)).

It belongs to the short-chain dehydrogenases/reductases (SDR) family. In terms of processing, pupylated at Lys-280 by the prokaryotic ubiquitin-like protein Pup, which probably leads to its degradation by the proteasome.

The protein is Putative short-chain type dehydrogenase/reductase Rv0148 of Mycobacterium tuberculosis (strain ATCC 25618 / H37Rv).